Here is a 305-residue protein sequence, read N- to C-terminus: Translation initiation factor eIF2B subunit alpha (305 aa).

The protein belongs to the eIF-2B alpha/beta/delta subunits family. In terms of assembly, component of the translation initiation factor 2B (eIF2B) complex which is a heterodecamer of two sets of five different subunits: alpha, beta, gamma, delta and epsilon. Subunits alpha, beta and delta comprise a regulatory subcomplex and subunits epsilon and gamma comprise a catalytic subcomplex. Within the complex, the hexameric regulatory complex resides at the center, with the two heterodimeric catalytic subcomplexes bound on opposite sides.

It localises to the cytoplasm. The protein localises to the cytosol. Activated by the chemical integrated stress response (ISR) inhibitor ISRIB which stimulates guanine nucleotide exchange factor activity for both phosphorylated and unphosphorylated eIF2. Functionally, acts as a component of the translation initiation factor 2B (eIF2B) complex, which catalyzes the exchange of GDP for GTP on eukaryotic initiation factor 2 (eIF2) gamma subunit. Its guanine nucleotide exchange factor activity is repressed when bound to eIF2 complex phosphorylated on the alpha subunit, thereby limiting the amount of methionyl-initiator methionine tRNA available to the ribosome and consequently global translation is repressed. The polypeptide is Translation initiation factor eIF2B subunit alpha (EIF2B1) (Bos taurus (Bovine)).